A 178-amino-acid chain; its full sequence is Ribulose bisphosphate carboxylase small subunit, chloroplastic 4 (178 aa).

The transit peptide at 1–54 (MASISSTVATVSRAAPAQANMVAPFTGLKSNAAFPATKKANDFSTLPSNGGRVQ) directs the protein to the chloroplast.

This sequence belongs to the RuBisCO small chain family. Heterohexadecamer of 8 large and 8 small subunits.

The protein resides in the plastid. It is found in the chloroplast. Functionally, ruBisCO catalyzes two reactions: the carboxylation of D-ribulose 1,5-bisphosphate, the primary event in carbon dioxide fixation, as well as the oxidative fragmentation of the pentose substrate. Both reactions occur simultaneously and in competition at the same active site. Although the small subunit is not catalytic it is essential for maximal activity. The sequence is that of Ribulose bisphosphate carboxylase small subunit, chloroplastic 4 from Flaveria pringlei.